We begin with the raw amino-acid sequence, 239 residues long: Pyridoxine 5'-phosphate synthase (239 aa).

Asparagine 7 lines the 3-amino-2-oxopropyl phosphate pocket. Residue 9 to 10 (DH) participates in 1-deoxy-D-xylulose 5-phosphate binding. A 3-amino-2-oxopropyl phosphate-binding site is contributed by arginine 18. Histidine 43 (proton acceptor) is an active-site residue. 1-deoxy-D-xylulose 5-phosphate contacts are provided by arginine 45 and histidine 50. Glutamate 70 acts as the Proton acceptor in catalysis. Threonine 100 is a binding site for 1-deoxy-D-xylulose 5-phosphate. Histidine 191 functions as the Proton donor in the catalytic mechanism. 3-amino-2-oxopropyl phosphate-binding positions include glycine 192 and 213–214 (GH).

This sequence belongs to the PNP synthase family. In terms of assembly, homooctamer; tetramer of dimers.

It localises to the cytoplasm. It catalyses the reaction 3-amino-2-oxopropyl phosphate + 1-deoxy-D-xylulose 5-phosphate = pyridoxine 5'-phosphate + phosphate + 2 H2O + H(+). It functions in the pathway cofactor biosynthesis; pyridoxine 5'-phosphate biosynthesis; pyridoxine 5'-phosphate from D-erythrose 4-phosphate: step 5/5. Catalyzes the complicated ring closure reaction between the two acyclic compounds 1-deoxy-D-xylulose-5-phosphate (DXP) and 3-amino-2-oxopropyl phosphate (1-amino-acetone-3-phosphate or AAP) to form pyridoxine 5'-phosphate (PNP) and inorganic phosphate. The protein is Pyridoxine 5'-phosphate synthase of Nostoc sp. (strain PCC 7120 / SAG 25.82 / UTEX 2576).